Consider the following 82-residue polypeptide: Sec-independent protein translocase protein TatA (82 aa).

A helical membrane pass occupies residues 1 to 21; it reads MHPPSITQLLIILLIIVLLFG. The disordered stretch occupies residues 42 to 82; that stretch reads AVKEDEEDNQSEENTKSQIKQSESKNENVSKTHTDSQKQDT. Basic and acidic residues predominate over residues 63–82; it reads SESKNENVSKTHTDSQKQDT.

The protein belongs to the TatA/E family. As to quaternary structure, the Tat system comprises two distinct complexes: a TatABC complex, containing multiple copies of TatA, TatB and TatC subunits, and a separate TatA complex, containing only TatA subunits. Substrates initially bind to the TatABC complex, which probably triggers association of the separate TatA complex to form the active translocon.

The protein resides in the cell inner membrane. Its function is as follows. Part of the twin-arginine translocation (Tat) system that transports large folded proteins containing a characteristic twin-arginine motif in their signal peptide across membranes. TatA could form the protein-conducting channel of the Tat system. This is Sec-independent protein translocase protein TatA from Helicobacter hepaticus (strain ATCC 51449 / 3B1).